The primary structure comprises 445 residues: 26S proteasome regulatory subunit RPN5 (445 aa).

Ser2 carries the post-translational modification N-acetylserine. One can recognise a PCI domain in the interval 233 to 407 (EYLEVAQYLQ…KIVNFEKPKN (175 aa)).

The protein belongs to the proteasome subunit p55 family. In terms of processing, N-acetylated by NAT1.

Acts as a regulatory subunit of the 26S proteasome which is involved in the ATP-dependent degradation of ubiquitinated proteins. The protein is 26S proteasome regulatory subunit RPN5 (RPN5) of Saccharomyces cerevisiae (strain ATCC 204508 / S288c) (Baker's yeast).